Consider the following 749-residue polypeptide: Basic juvenile hormone-suppressible protein 2 (749 aa).

Positions 1–14 (MRAVLLFVVSLAAL) are cleaved as a signal peptide.

Belongs to the hemocyanin family. In terms of tissue distribution, fat body, and hemolymph of larvae.

The polypeptide is Basic juvenile hormone-suppressible protein 2 (BJSP-2) (Trichoplusia ni (Cabbage looper)).